The following is a 501-amino-acid chain: Spore development regulator VOSA (501 aa).

Disordered regions lie at residues 26–55, 67–88, and 228–274; these read GQFG…GQEP, PQRA…IDPP, and AMTT…DTRG. Positions 35–50 are enriched in polar residues; that stretch reads PPQAETQMSAQASAQA. The Velvet domain occupies 52-223; the sequence is GQEPEPDYKL…SDQGVRLRVR (172 aa). 2 stretches are compositionally biased toward basic and acidic residues: residues 67–85 and 237–252; these read PQRA…RKPI and QHAE…DRKQ. Residues 253-271 show a composition bias toward polar residues; that stretch reads TSAVSRHSSINENDSTPTD. The Nuclear localization signal signature appears at 364-371; the sequence is MSSHHGYT. 2 disordered regions span residues 378-455 and 474-501; these read FAPH…QQTP and PGQL…EPGA.

This sequence belongs to the velvet family. VosA subfamily. In terms of assembly, forms a heterodimeric complex with VELB; the formation of the VELB-VOSA complex is light-dependent.

The protein localises to the nucleus. Functionally, component of the VELB-VOSA heterodimeric complex that plays a dual role in activating genes associated with spore maturation and repressing certain development-associated genes. The complex binds DNA through the DNA-binding domain of VOSA that recognizes an 11-nucleotide consensus sequence 5'-CTGGCCGCGGC-3' consisting of two motifs in the promoters of key developmental regulatory genes. Appears dispensable for the development and pathogenicity. This Pyricularia oryzae (strain 70-15 / ATCC MYA-4617 / FGSC 8958) (Rice blast fungus) protein is Spore development regulator VOSA.